Reading from the N-terminus, the 689-residue chain is Homoaconitase, mitochondrial (689 aa).

A mitochondrion-targeting transit peptide spans 1-17 (MVVLRRSFHVYTRLQRG). [4Fe-4S] cluster is bound by residues Cys336, Cys403, and Cys406.

This sequence belongs to the aconitase/IPM isomerase family. [4Fe-4S] cluster serves as cofactor.

It localises to the mitochondrion. The catalysed reaction is (2R,3S)-homoisocitrate = cis-homoaconitate + H2O. It functions in the pathway amino-acid biosynthesis; L-lysine biosynthesis via AAA pathway; L-alpha-aminoadipate from 2-oxoglutarate: step 3/5. In terms of biological role, catalyzes the reversible hydration of cis-homoaconitate to (2R,3S)-homoisocitrate, a step in the alpha-aminoadipate pathway for lysine biosynthesis. The chain is Homoaconitase, mitochondrial (LYS4) from Candida glabrata (strain ATCC 2001 / BCRC 20586 / JCM 3761 / NBRC 0622 / NRRL Y-65 / CBS 138) (Yeast).